A 335-amino-acid polypeptide reads, in one-letter code: Beta-hexosaminidase (335 aa).

Substrate is bound by residues aspartate 60, arginine 68, arginine 133, and 163-164 (KH). Histidine 176 functions as the Proton donor/acceptor in the catalytic mechanism. The active-site Nucleophile is aspartate 247.

It belongs to the glycosyl hydrolase 3 family. NagZ subfamily.

It localises to the cytoplasm. It carries out the reaction Hydrolysis of terminal non-reducing N-acetyl-D-hexosamine residues in N-acetyl-beta-D-hexosaminides.. Its pathway is cell wall biogenesis; peptidoglycan recycling. In terms of biological role, plays a role in peptidoglycan recycling by cleaving the terminal beta-1,4-linked N-acetylglucosamine (GlcNAc) from peptide-linked peptidoglycan fragments, giving rise to free GlcNAc, anhydro-N-acetylmuramic acid and anhydro-N-acetylmuramic acid-linked peptides. The polypeptide is Beta-hexosaminidase (Stenotrophomonas maltophilia (strain K279a)).